The primary structure comprises 170 residues: Large ribosomal subunit protein bL17 (170 aa).

Positions 124 to 134 are enriched in low complexity; the sequence is AAEAPKAAKAA. The segment at 124 to 170 is disordered; the sequence is AAEAPKAAKAAPVKEAKPAAEEAPAKPKRTRKPKADEADAEAAKEEN. Basic and acidic residues-rich tracts occupy residues 135–148 and 156–170; these read PVKEAKPAAEEAPA and PKADEADAEAAKEEN.

Belongs to the bacterial ribosomal protein bL17 family. As to quaternary structure, part of the 50S ribosomal subunit. Contacts protein L32.

The chain is Large ribosomal subunit protein bL17 from Desulfovibrio desulfuricans (strain ATCC 27774 / DSM 6949 / MB).